A 312-amino-acid chain; its full sequence is Acyl-CoA C20 Delta5-desaturase (312 aa).

Transmembrane regions (helical) follow at residues 45-65 and 69-89; these read VFHILFIGGLHVLCLFAPSTF and SFWVCFALYAICGVFGTTLSF. Fe cation contacts are provided by histidine 90, histidine 95, histidine 127, histidine 130, and histidine 131. Residues 90 to 95 carry the Histidine box-1 motif; that stretch reads HRNLTH. The Histidine box-2 signature appears at 127–131; that stretch reads HRYHH. Residues 193-213 traverse the membrane as a helical segment; it reads LQAALLYLFGGFPFIVWGMAV. 4 residues coordinate Fe cation: histidine 230, histidine 259, histidine 262, and histidine 263. The Histidine box-3 signature appears at 259-263; it reads HNNHH.

It belongs to the fatty acid desaturase type 1 family. Fe(2+) is required as a cofactor.

It localises to the membrane. It carries out the reaction (11Z,14Z)-eicosadienoyl-CoA + AH2 + O2 = (5Z,11Z,14Z)-eicosatrienoyl-CoA + A + 2 H2O. The enzyme catalyses (11Z,14Z,17Z)-eicosatrienoyl-CoA + AH2 + O2 = (5Z,11Z,14Z,17Z)-eicosatetraenoyl-CoA + A + 2 H2O. Its pathway is lipid metabolism; polyunsaturated fatty acid biosynthesis. Functionally, catalyzes the desaturation of 20:2Delta(11,14) and 20:3Delta(11,14,17) to generate sciadonic acid (20:3Delta(5,11,14)) and juniperonic acid (20:4Delta(5,11,14,17)). In Anemone leveillei (Windflower), this protein is Acyl-CoA C20 Delta5-desaturase.